The primary structure comprises 80 residues: UPF0154 protein MGAS10270_Spy0296 (80 aa).

The helical transmembrane segment at 4–24 threads the bilayer; the sequence is AIWILLLIVALGVGVFGGIFI.

Belongs to the UPF0154 family.

The protein localises to the cell membrane. The protein is UPF0154 protein MGAS10270_Spy0296 of Streptococcus pyogenes serotype M2 (strain MGAS10270).